Here is a 130-residue protein sequence, read N- to C-terminus: Sulfurtransferase TusD (130 aa).

Catalysis depends on Cys-80, which acts as the Cysteine persulfide intermediate.

The protein belongs to the DsrE/TusD family. Heterohexamer, formed by a dimer of trimers. The hexameric TusBCD complex contains 2 copies each of TusB, TusC and TusD. The TusBCD complex interacts with TusE.

The protein localises to the cytoplasm. In terms of biological role, part of a sulfur-relay system required for 2-thiolation of 5-methylaminomethyl-2-thiouridine (mnm(5)s(2)U) at tRNA wobble positions. Accepts sulfur from TusA and transfers it in turn to TusE. The polypeptide is Sulfurtransferase TusD (Proteus mirabilis (strain HI4320)).